We begin with the raw amino-acid sequence, 405 residues long: Type II secretion system protein F (405 aa).

The Cytoplasmic segment spans residues 1–168 (MAAFEYLALD…QRQQSRQKIQ (168 aa)). Ca(2+) is bound by residues threonine 97, glutamate 151, and aspartate 155. Residues 169–189 (LALLYPVILMVASLAIVGFLL) form a helical membrane-spanning segment. Residues 190 to 219 (GYVVPDVVRVFIDSGQTLPLLTRVLIGVSD) are Periplasmic-facing. A helical transmembrane segment spans residues 220–239 (WVKAWGALAFVAAIGGVIGF). Over 240 to 376 (RYALRKDAFR…IGLMVGLFEP (137 aa)) the chain is Cytoplasmic. A helical transmembrane segment spans residues 377 to 397 (FMLIFMGAVVLVIVLAILLPI). The Periplasmic portion of the chain corresponds to 398–405 (LSLNQLVG).

It belongs to the GSP F family. In terms of assembly, type II secretion system is composed of four main components: the outer membrane complex, the inner membrane complex, the cytoplasmic secretion ATPase and the periplasm-spanning pseudopilus. Homodimer. Interacts with XcpR/GspE and XcpY/GspL components.

The protein resides in the cell inner membrane. Functionally, component of the type II secretion system inner membrane complex required for the energy-dependent secretion of extracellular factors such as proteases and toxins from the periplasm. The sequence is that of Type II secretion system protein F (xcpS) from Pseudomonas aeruginosa (strain ATCC 15692 / DSM 22644 / CIP 104116 / JCM 14847 / LMG 12228 / 1C / PRS 101 / PAO1).